The sequence spans 522 residues: Cytochrome P450 monooxygenase FGSG_08207 (522 aa).

Residues 10–30 (LLLSKPVVLGLAACALLFLIG) traverse the membrane as a helical segment. Residues Asn-104 and Asn-155 are each glycosylated (N-linked (GlcNAc...) asparagine). Cys-441 is a heme binding site.

Belongs to the cytochrome P450 family. It depends on heme as a cofactor.

Its subcellular location is the membrane. It functions in the pathway secondary metabolite biosynthesis. Functionally, cytochrome P450 monooxygenase; part of the gene cluster that mediates the biosynthesis of the lipopeptide fusaristatin A. Fusaristatin A consists of a polyketide chain linked to three amino acid residues glutamine (Gln), dehydroalanine (dehydro-Ala), and beta-aminoisobutyric acid. The biosynthesis starts with formation of a linear polyketide chain by the highly reducing polyketide synthase PKS6. The gene cluster does not contain an acyl-CoA ligase or an acyl-transferase, and it is therefore predicted that the polyketide is transferred directly to the nonribosomal peptide synthetase NRPS7. Modules 1-3 from NRPS7 incorporate dehydro-Ala, Gln, and beta-aminoisobutyric acid in the compound, which is released by cyclization. The beta-aminoisobutyric acid units are most likely not freely available to the NRPS, but can be synthesized from thymine, which requires a dehydrogenase, a monooxygenase, and an aminotransferase. The fusaristatin A cluster contains a cytochrome P450 monooxygenase (FGSG_08207) and an aminotransferase (FGSG_17085), which theoretically can perform two of the enzymatic steps. The enzymes may however also be involved in biosynthesis of dehydroalanine or modification of the polyketide. The dehydro-Ala residue can be a result of cyclization, where serine is dehydrated. The last gene of the cluster encodes a protein with an A/B barrel domain found in variable enzymes, which hampers functional prediction. The protein is Cytochrome P450 monooxygenase FGSG_08207 of Gibberella zeae (strain ATCC MYA-4620 / CBS 123657 / FGSC 9075 / NRRL 31084 / PH-1) (Wheat head blight fungus).